A 149-amino-acid chain; its full sequence is Calmodulin (149 aa).

The residue at position 2 (A2) is an N-acetylalanine. EF-hand domains are found at residues 8–43 (EQIA…LGQN), 44–79 (PTEA…KMKD), 81–116 (DSEE…LGEK), and 117–149 (LTDE…MMAK). Ca(2+)-binding residues include D21, D23, D25, C27, E32, D57, D59, N61, T63, E68, D94, D96, N98, and E105. K116 is modified (N6,N6,N6-trimethyllysine). Ca(2+)-binding residues include D130, D132, D134, Q136, and E141.

It belongs to the calmodulin family.

Its function is as follows. Calmodulin mediates the control of a large number of enzymes, ion channels and other proteins by Ca(2+). Among the enzymes to be stimulated by the calmodulin-Ca(2+) complex are a number of protein kinases and phosphatases. This chain is Calmodulin (CALM1), found in Zea mays (Maize).